A 383-amino-acid polypeptide reads, in one-letter code: Succinyl-diaminopimelate desuccinylase (383 aa).

His-73 provides a ligand contact to Zn(2+). Asp-75 is an active-site residue. Residue Asp-107 coordinates Zn(2+). Glu-141 acts as the Proton acceptor in catalysis. The Zn(2+) site is built by Glu-142, Glu-170, and His-356.

Belongs to the peptidase M20A family. DapE subfamily. Homodimer. Zn(2+) is required as a cofactor. It depends on Co(2+) as a cofactor.

It catalyses the reaction N-succinyl-(2S,6S)-2,6-diaminopimelate + H2O = (2S,6S)-2,6-diaminopimelate + succinate. It participates in amino-acid biosynthesis; L-lysine biosynthesis via DAP pathway; LL-2,6-diaminopimelate from (S)-tetrahydrodipicolinate (succinylase route): step 3/3. In terms of biological role, catalyzes the hydrolysis of N-succinyl-L,L-diaminopimelic acid (SDAP), forming succinate and LL-2,6-diaminopimelate (DAP), an intermediate involved in the bacterial biosynthesis of lysine and meso-diaminopimelic acid, an essential component of bacterial cell walls. This is Succinyl-diaminopimelate desuccinylase from Pseudomonas fluorescens (strain Pf0-1).